Consider the following 280-residue polypeptide: 3-dehydroshikimate dehydratase (280 aa).

Residues tyrosine 70, arginine 102, and glutamate 142 each contribute to the substrate site. Glutamate 142 provides a ligand contact to Mn(2+). The active-site Proton acceptor is the histidine 144. 2 residues coordinate substrate: aspartate 172 and histidine 175. Aspartate 172 is a Mn(2+) binding site. Position 198 (histidine 198) interacts with Mn(2+). Residues tyrosine 217 and glutamate 253 each coordinate substrate. Glutamate 253 serves as a coordination point for Mn(2+).

In terms of assembly, homodimer. The cofactor is Mn(2+).

It catalyses the reaction 3-dehydroshikimate = 3,4-dihydroxybenzoate + H2O. Its pathway is aromatic compound metabolism; 3,4-dihydroxybenzoate biosynthesis; 3,4-dihydroxybenzoate from 3-dehydroquinate: step 2/2. It functions in the pathway siderophore biosynthesis; petrobactin biosynthesis. In terms of biological role, involved in the biosynthesis of petrobactin, a catecholate siderophore that functions in both iron acquisition and virulence. Catalyzes the conversion of 3-dehydroshikimate to 3,4-dihydroxybenzoate (3,4-DHBA). The chain is 3-dehydroshikimate dehydratase from Bacillus anthracis.